We begin with the raw amino-acid sequence, 272 residues long: Sugar-phosphatase AraL (272 aa).

It belongs to the HAD-like hydrolase superfamily. Mg(2+) serves as cofactor.

It carries out the reaction sugar phosphate + H2O = sugar + phosphate.. It catalyses the reaction O-phospho-L-serine + H2O = L-serine + phosphate. The enzyme catalyses O-phospho-D-serine + H2O = D-serine + phosphate. In terms of biological role, catalyzes the dephosphorylation of C5 and C6 carbon sugars in vitro. Catalyzes the dephosphorylation of 3'-AMP and phosphoserine in vitro. The protein is Sugar-phosphatase AraL (araL) of Bacillus subtilis (strain 168).